The primary structure comprises 692 residues: FMR1-interacting protein NUFIP2 (692 aa).

The segment at 1-100 (MEEKPGQPQP…KKTGYGEING (100 aa)) is disordered. Composition is skewed to basic residues over residues 11–23 (QHHH…HHHP) and 31–54 (SHHH…HHQQ). Lysine 79 participates in a covalent cross-link: Glycyl lysine isopeptide (Lys-Gly) (interchain with G-Cter in SUMO2). Threonine 88 is subject to Phosphothreonine. Residue lysine 110 forms a Glycyl lysine isopeptide (Lys-Gly) (interchain with G-Cter in SUMO2) linkage. 2 positions are modified to phosphoserine: serine 113 and serine 114. Residues lysine 137, lysine 147, lysine 158, and lysine 172 each participate in a glycyl lysine isopeptide (Lys-Gly) (interchain with G-Cter in SUMO2) cross-link. Residues 205–233 (SKGADNDGSGSESGYTTPKKRKARRNSAK) form a disordered region. Serine 213 and serine 215 each carry phosphoserine. Residue tyrosine 219 is modified to Phosphotyrosine. 2 positions are modified to phosphothreonine: threonine 220 and threonine 221. The segment covering 222 to 231 (PKKRKARRNS) has biased composition (basic residues). Residues lysine 262 and lysine 281 each participate in a glycyl lysine isopeptide (Lys-Gly) (interchain with G-Cter in SUMO2) cross-link. Disordered stretches follow at residues 277-337 (KPIW…WTLF) and 369-401 (TVQN…SQVP). An Omega-N-methylarginine modification is found at arginine 291. Lysine 293 participates in a covalent cross-link: Glycyl lysine isopeptide (Lys-Gly) (interchain with G-Cter in SUMO2). A Phosphoserine modification is found at serine 304. Lysine 307 is covalently cross-linked (Glycyl lysine isopeptide (Lys-Gly) (interchain with G-Cter in SUMO2)). Over residues 371-395 (QNSSVSPSSSSSSSSTGETQTQSSS) the composition is skewed to low complexity. A Phosphoserine modification is found at serine 376. At threonine 569 the chain carries Phosphothreonine. Serine 570, serine 589, serine 605, and serine 626 each carry phosphoserine. Phosphothreonine is present on threonine 630. Residues serine 634, serine 649, serine 652, and serine 689 each carry the phosphoserine modification.

In terms of assembly, interacts with FMR1 (via N-terminus). Interacts with DDX6.

The protein localises to the nucleus. The protein resides in the cytoplasm. It localises to the stress granule. In terms of biological role, binds RNA. The chain is FMR1-interacting protein NUFIP2 (Nufip2) from Mus musculus (Mouse).